Reading from the N-terminus, the 144-residue chain is Probable calcium-binding protein CML31 (144 aa).

4 consecutive EF-hand domains span residues 1-31 (MAEI…FSPQ), 32-67 (ITSE…NGGG), 72-107 (EEEV…LGEK), and 108-143 (HTME…NKES). Residues Asp45, Asp47, Asp49, Gln51, Glu56, Asp85, Asp87, Asp89, Lys91, Glu96, Asp121, Asp123, Asp125, and Glu132 each coordinate Ca(2+).

In terms of biological role, potential calcium sensor. This chain is Probable calcium-binding protein CML31 (CML31), found in Arabidopsis thaliana (Mouse-ear cress).